Consider the following 1168-residue polypeptide: Pre-mRNA-splicing factor ATP-dependent RNA helicase prp22 (1168 aa).

Disordered regions lie at residues 77–100 and 144–197; these read KDDI…HDLD and TLAK…RSSR. The segment covering 84–94 has biased composition (low complexity); sequence NVNNGSNSVNG. A compositionally biased stretch (basic and acidic residues) spans 149 to 173; it reads RRNDRDSRRDERHYLNGIRERRERS. The span at 184–197 shows a compositional bias: low complexity; it reads TSISGQSHSSRSSR. In terms of domain architecture, S1 motif spans 207–280; it reads YGIYSGVVSG…SAKRISLSMK (74 aa). The segment at 287-314 is disordered; that stretch reads GEDLNPDQVSRSTKKGSGANAIPLSAQN. Residues 520–684 enclose the Helicase ATP-binding domain; that stretch reads LEAVSKNQIL…FYKCPIFTIP (165 aa). 533–540 is an ATP binding site; sequence GETGSGKT. A DEAH box motif is present at residues 631 to 634; the sequence is DEAH. Positions 702–882 constitute a Helicase C-terminal domain; the sequence is YLDAALMTVM…HTILMLKAMG (181 aa).

It belongs to the DEAD box helicase family. DEAH subfamily. DDX8/PRP22 sub-subfamily. Belongs to the 40S cdc5-associated complex (or cwf complex), a spliceosome sub-complex reminiscent of a late-stage spliceosome composed of the U2, U5 and U6 snRNAs and at least brr2, cdc5, cwf2/prp3, cwf3/syf1, cwf4/syf3, cwf5/ecm2, spp42/cwf6, cwf7/spf27, cwf8, cwf9, cwf10, cwf11, cwf12, prp45/cwf13, cwf14, cwf15, cwf16, cwf17, cwf18, cwf19, cwf20, cwf21, cwf22, cwf23, cwf24, cwf25, cwf26, cyp7/cwf27, cwf28, cwf29/ist3, lea1, msl1, prp5/cwf1, prp10, prp12/sap130, prp17, prp22, sap61, sap62, sap114, sap145, slu7, smb1, smd1, smd3, smf1, smg1 and syf2.

The protein resides in the nucleus. The catalysed reaction is ATP + H2O = ADP + phosphate + H(+). Acts late in the splicing of pre-mRNA. Required for the splicing of introns with a branch nucleotide to 3'-splice site distance greater or equal to 15. Mediates the release of the spliced mRNA from spliceosomes. This chain is Pre-mRNA-splicing factor ATP-dependent RNA helicase prp22 (prp22), found in Schizosaccharomyces pombe (strain 972 / ATCC 24843) (Fission yeast).